The following is a 518-amino-acid chain: Cell wall biosynthesis protein LcpA (518 aa).

The Cytoplasmic segment spans residues 1 to 31; the sequence is MTEKYRPVRDIKPAPAAMQSTKQAGHPVFRS. The chain crosses the membrane as a helical span at residues 32-52; sequence VVAFVSVLVLLVSGLGYLAVG. Topologically, residues 53–518 are periplasmic; the sequence is KVDGVASGNL…AGGDGPRCVN (466 aa). A disordered region spans residues 485–518; sequence AVTSSTVGQPGADVGEPIESPEFDAGGDGPRCVN.

The protein belongs to the LytR/CpsA/Psr (LCP) family. Forms homodimers and homotetramers.

The protein resides in the cell inner membrane. Functionally, involved in cell wall biosynthesis. May be responsible for the transfer of arabinogalactan onto peptidoglycan. In vitro, has pyrophosphatase activity. The chain is Cell wall biosynthesis protein LcpA from Corynebacterium glutamicum (strain ATCC 13032 / DSM 20300 / JCM 1318 / BCRC 11384 / CCUG 27702 / LMG 3730 / NBRC 12168 / NCIMB 10025 / NRRL B-2784 / 534).